Reading from the N-terminus, the 177-residue chain is ATP synthase subunit delta (177 aa).

It belongs to the ATPase delta chain family. In terms of assembly, F-type ATPases have 2 components, F(1) - the catalytic core - and F(0) - the membrane proton channel. F(1) has five subunits: alpha(3), beta(3), gamma(1), delta(1), epsilon(1). F(0) has three main subunits: a(1), b(2) and c(10-14). The alpha and beta chains form an alternating ring which encloses part of the gamma chain. F(1) is attached to F(0) by a central stalk formed by the gamma and epsilon chains, while a peripheral stalk is formed by the delta and b chains.

Its subcellular location is the cell inner membrane. Functionally, f(1)F(0) ATP synthase produces ATP from ADP in the presence of a proton or sodium gradient. F-type ATPases consist of two structural domains, F(1) containing the extramembraneous catalytic core and F(0) containing the membrane proton channel, linked together by a central stalk and a peripheral stalk. During catalysis, ATP synthesis in the catalytic domain of F(1) is coupled via a rotary mechanism of the central stalk subunits to proton translocation. Its function is as follows. This protein is part of the stalk that links CF(0) to CF(1). It either transmits conformational changes from CF(0) to CF(1) or is implicated in proton conduction. The polypeptide is ATP synthase subunit delta (Idiomarina loihiensis (strain ATCC BAA-735 / DSM 15497 / L2-TR)).